The chain runs to 239 residues: Peptidyl-tRNA hydrolase (239 aa).

Y14 is a tRNA binding site. The active-site Proton acceptor is H19. TRNA contacts are provided by F64, N66, and N112. The disordered stretch occupies residues A188–R239. Basic and acidic residues predominate over residues K198–R239.

It belongs to the PTH family. As to quaternary structure, monomer.

The protein resides in the cytoplasm. The catalysed reaction is an N-acyl-L-alpha-aminoacyl-tRNA + H2O = an N-acyl-L-amino acid + a tRNA + H(+). Its function is as follows. Hydrolyzes ribosome-free peptidyl-tRNAs (with 1 or more amino acids incorporated), which drop off the ribosome during protein synthesis, or as a result of ribosome stalling. Catalyzes the release of premature peptidyl moieties from peptidyl-tRNA molecules trapped in stalled 50S ribosomal subunits, and thus maintains levels of free tRNAs and 50S ribosomes. The chain is Peptidyl-tRNA hydrolase from Jannaschia sp. (strain CCS1).